The chain runs to 65 residues: SAGTSCVPPPSBGCHAILRTGIPGRLPPLZKTCGIGPRQVZRLQBLPCPGRRQLABMIAYCPRCR.

As to quaternary structure, homotrimer.

The protein is Trypsin inhibitor of Zea mays (Maize).